We begin with the raw amino-acid sequence, 358 residues long: Homoserine O-acetyltransferase (358 aa).

One can recognise an AB hydrolase-1 domain in the interval 41-343 (NAVLICHALT…DYGHDAFLVD (303 aa)). Serine 143 (nucleophile) is an active-site residue. Arginine 212 contacts substrate. Active-site residues include aspartate 304 and histidine 337. Aspartate 338 lines the substrate pocket.

This sequence belongs to the AB hydrolase superfamily. MetX family. As to quaternary structure, homodimer.

Its subcellular location is the cytoplasm. The catalysed reaction is L-homoserine + acetyl-CoA = O-acetyl-L-homoserine + CoA. It participates in amino-acid biosynthesis; L-methionine biosynthesis via de novo pathway; O-acetyl-L-homoserine from L-homoserine: step 1/1. In terms of biological role, transfers an acetyl group from acetyl-CoA to L-homoserine, forming acetyl-L-homoserine. This chain is Homoserine O-acetyltransferase, found in Haemophilus influenzae (strain 86-028NP).